The sequence spans 376 residues: Putative type I restriction enzyme MpnIIP endonuclease subunit N-terminal part (376 aa).

Its function is as follows. The N-terminal section of a putative type I restriction enzyme that if reconstituted might recognize 5'-GAN(7)TAY-3' and cleave a random distance away. Subunit R is required for both nuclease and ATPase activities, but not for modification. This Mycoplasma pneumoniae (strain ATCC 29342 / M129 / Subtype 1) (Mycoplasmoides pneumoniae) protein is Putative type I restriction enzyme MpnIIP endonuclease subunit N-terminal part.